The following is a 472-amino-acid chain: Carboxypeptidase Q (472 aa).

The first 20 residues, 1–20 (MRFLFFLFVAVVHLFSLGSG), serve as a signal peptide directing secretion. Positions 21-44 (KAIYKSGVSQRTFQEIKEEIANYE) are excised as a propeptide. An N-linked (GlcNAc...) asparagine glycan is attached at Asn61. His290 and Asp302 together coordinate Zn(2+). Glu336 serves as the catalytic Nucleophile. Residue Glu337 participates in Zn(2+) binding. N-linked (GlcNAc...) asparagine glycosylation is present at Asn353. Asp364 is a binding site for Zn(2+). An N-linked (GlcNAc...) asparagine glycan is attached at Asn396. His434 is a Zn(2+) binding site.

Belongs to the peptidase M28 family. In terms of assembly, homodimer. The monomeric form is inactive while the homodimer is active. Post-translationally, N-glycosylated. The secreted form is modified by hybrid or complex type oligosaccharide chains.

The protein resides in the endoplasmic reticulum. It localises to the golgi apparatus. It is found in the lysosome. Its subcellular location is the secreted. Functionally, carboxypeptidase that may play an important role in the hydrolysis of circulating peptides. Catalyzes the hydrolysis of dipeptides with unsubstituted terminals into amino acids. May play a role in the liberation of thyroxine hormone from its thyroglobulin (Tg) precursor. The chain is Carboxypeptidase Q (Cpq) from Rattus norvegicus (Rat).